A 236-amino-acid chain; its full sequence is Biosynthetic peptidoglycan transglycosylase (236 aa).

A helical membrane pass occupies residues 12–31; it reads ALLWFAAGSVLVVLVLRWVP.

Belongs to the glycosyltransferase 51 family.

It is found in the cell inner membrane. The enzyme catalyses [GlcNAc-(1-&gt;4)-Mur2Ac(oyl-L-Ala-gamma-D-Glu-L-Lys-D-Ala-D-Ala)](n)-di-trans,octa-cis-undecaprenyl diphosphate + beta-D-GlcNAc-(1-&gt;4)-Mur2Ac(oyl-L-Ala-gamma-D-Glu-L-Lys-D-Ala-D-Ala)-di-trans,octa-cis-undecaprenyl diphosphate = [GlcNAc-(1-&gt;4)-Mur2Ac(oyl-L-Ala-gamma-D-Glu-L-Lys-D-Ala-D-Ala)](n+1)-di-trans,octa-cis-undecaprenyl diphosphate + di-trans,octa-cis-undecaprenyl diphosphate + H(+). The protein operates within cell wall biogenesis; peptidoglycan biosynthesis. Functionally, peptidoglycan polymerase that catalyzes glycan chain elongation from lipid-linked precursors. The protein is Biosynthetic peptidoglycan transglycosylase of Pseudomonas syringae pv. syringae (strain B728a).